We begin with the raw amino-acid sequence, 201 residues long: Oligoribonuclease (201 aa).

The region spanning 20-183 is the Exonuclease domain; sequence LVWLDMEMTG…ADIHESIDEL (164 aa). Tyr141 is a catalytic residue.

Belongs to the oligoribonuclease family.

It localises to the cytoplasm. 3'-to-5' exoribonuclease specific for small oligoribonucleotides. The chain is Oligoribonuclease from Burkholderia pseudomallei (strain 1106a).